Here is a 172-residue protein sequence, read N- to C-terminus: Secretory-abundant heat soluble protein 64681 (172 aa).

The N-terminal stretch at M1–A19 is a signal peptide. The segment at E30 to P59 is SAHS-c1. The tract at residues W74–E102 is SAHS-c2. N-linked (GlcNAc...) asparagine glycans are attached at residues N108 and N133. The segment at K115–K164 is SAHS-c3.

The protein belongs to the Secretory-abundant heat soluble protein (SAHS) family.

It localises to the secreted. Functionally, secreted heat soluble protein acting as a molecular shield in water-deficient condition. Tardigrade-specific intrinsically disordered proteins (TDPs) are essential for desiccation tolerance by forming non-crystalline amorphous solids upon desiccation, and this vitrified state mirrors their protective capabilities. The sequence is that of Secretory-abundant heat soluble protein 64681 from Hypsibius exemplaris (Freshwater tardigrade).